Reading from the N-terminus, the 557-residue chain is Proline--tRNA ligase (557 aa).

This sequence belongs to the class-II aminoacyl-tRNA synthetase family. ProS type 1 subfamily. Homodimer.

The protein resides in the cytoplasm. It catalyses the reaction tRNA(Pro) + L-proline + ATP = L-prolyl-tRNA(Pro) + AMP + diphosphate. Its function is as follows. Catalyzes the attachment of proline to tRNA(Pro) in a two-step reaction: proline is first activated by ATP to form Pro-AMP and then transferred to the acceptor end of tRNA(Pro). As ProRS can inadvertently accommodate and process non-cognate amino acids such as alanine and cysteine, to avoid such errors it has two additional distinct editing activities against alanine. One activity is designated as 'pretransfer' editing and involves the tRNA(Pro)-independent hydrolysis of activated Ala-AMP. The other activity is designated 'posttransfer' editing and involves deacylation of mischarged Ala-tRNA(Pro). The misacylated Cys-tRNA(Pro) is not edited by ProRS. This chain is Proline--tRNA ligase, found in Baumannia cicadellinicola subsp. Homalodisca coagulata.